The following is a 74-amino-acid chain: Translation initiation factor IF-1 (74 aa).

An S1-like domain is found at 1–73 (MSNKEDIIKM…TKGRIVYRKK (73 aa)).

This sequence belongs to the IF-1 family. As to quaternary structure, component of the 30S ribosomal translation pre-initiation complex which assembles on the 30S ribosome in the order IF-2 and IF-3, IF-1 and N-formylmethionyl-tRNA(fMet); mRNA recruitment can occur at any time during PIC assembly.

It is found in the cytoplasm. One of the essential components for the initiation of protein synthesis. Stabilizes the binding of IF-2 and IF-3 on the 30S subunit to which N-formylmethionyl-tRNA(fMet) subsequently binds. Helps modulate mRNA selection, yielding the 30S pre-initiation complex (PIC). Upon addition of the 50S ribosomal subunit IF-1, IF-2 and IF-3 are released leaving the mature 70S translation initiation complex. The chain is Translation initiation factor IF-1 from Thermosipho melanesiensis (strain DSM 12029 / CIP 104789 / BI429).